Here is a 141-residue protein sequence, read N- to C-terminus: uncharacterized protein (141 aa).

A run of 2 helical transmembrane segments spans residues 12-32 and 35-55; these read GIAGCGAGGVVMAIASVTLVT and PGRVLTGVAALGLILFASATW.

It is found in the cell membrane. This is an uncharacterized protein from Mycobacterium tuberculosis (strain CDC 1551 / Oshkosh).